The following is a 475-amino-acid chain: Aspartic proteinase 39 (475 aa).

An N-terminal signal peptide occupies residues 1–23 (MELRRKLCIVVAVFVIVIEFASA). Positions 74–422 (YFTKIKLGSP…DLDNEVIGWA (349 aa)) constitute a Peptidase A1 domain. Aspartate 92 is an active-site residue. Residues asparagine 124 and asparagine 222 are each glycosylated (N-linked (GlcNAc...) asparagine). Aspartate 303 is a catalytic residue. N-linked (GlcNAc...) asparagine glycosylation is found at asparagine 425 and asparagine 446. A lipid anchor (GPI-anchor amidated serine) is attached at serine 449. Residues 450–475 (APRLLMITKLLTILSPLIVMAFTSLA) constitute a propeptide, removed in mature form.

Belongs to the peptidase A1 family. In terms of tissue distribution, highly expressed in pollen and pollen tubes. Mostly expressed in inflorescence, flowers and siliques, and barely in leaves and seedlings.

The protein localises to the cell membrane. It localises to the cytoplasm. The protein resides in the cytosol. Displays aspartic proteolytic activity. Together with A36, contributes to pollen and ovule development, including the apical cell wall constitution of the growing pollen tubes. The chain is Aspartic proteinase 39 from Arabidopsis thaliana (Mouse-ear cress).